The sequence spans 217 residues: ATP phosphoribosyltransferase (217 aa).

It belongs to the ATP phosphoribosyltransferase family. Short subfamily. As to quaternary structure, heteromultimer composed of HisG and HisZ subunits.

Its subcellular location is the cytoplasm. It catalyses the reaction 1-(5-phospho-beta-D-ribosyl)-ATP + diphosphate = 5-phospho-alpha-D-ribose 1-diphosphate + ATP. It participates in amino-acid biosynthesis; L-histidine biosynthesis; L-histidine from 5-phospho-alpha-D-ribose 1-diphosphate: step 1/9. Its function is as follows. Catalyzes the condensation of ATP and 5-phosphoribose 1-diphosphate to form N'-(5'-phosphoribosyl)-ATP (PR-ATP). Has a crucial role in the pathway because the rate of histidine biosynthesis seems to be controlled primarily by regulation of HisG enzymatic activity. This Syntrophomonas wolfei subsp. wolfei (strain DSM 2245B / Goettingen) protein is ATP phosphoribosyltransferase.